The sequence spans 280 residues: Ribosomal RNA small subunit methyltransferase I (280 aa).

This sequence belongs to the methyltransferase superfamily. RsmI family.

The protein resides in the cytoplasm. The catalysed reaction is cytidine(1402) in 16S rRNA + S-adenosyl-L-methionine = 2'-O-methylcytidine(1402) in 16S rRNA + S-adenosyl-L-homocysteine + H(+). In terms of biological role, catalyzes the 2'-O-methylation of the ribose of cytidine 1402 (C1402) in 16S rRNA. This Rickettsia prowazekii (strain Madrid E) protein is Ribosomal RNA small subunit methyltransferase I.